A 500-amino-acid polypeptide reads, in one-letter code: Arabinofuranosidase/B-xylosidase (500 aa).

An N-terminal signal peptide occupies residues 1-21 (MLSNARIIAAGCIAAGSLVAA). N467 carries N-linked (GlcNAc...) asparagine glycosylation.

Belongs to the glycosyl hydrolase 54 family.

It carries out the reaction Hydrolysis of terminal non-reducing alpha-L-arabinofuranoside residues in alpha-L-arabinosides.. The catalysed reaction is Hydrolysis of (1-&gt;4)-beta-D-xylans, to remove successive D-xylose residues from the non-reducing termini.. This chain is Arabinofuranosidase/B-xylosidase (xyl1), found in Trichoderma koningii (Hypocrea koningii).